Consider the following 419-residue polypeptide: Gamma-glutamyl phosphate reductase (419 aa).

This sequence belongs to the gamma-glutamyl phosphate reductase family.

Its subcellular location is the cytoplasm. The enzyme catalyses L-glutamate 5-semialdehyde + phosphate + NADP(+) = L-glutamyl 5-phosphate + NADPH + H(+). It participates in amino-acid biosynthesis; L-proline biosynthesis; L-glutamate 5-semialdehyde from L-glutamate: step 2/2. Functionally, catalyzes the NADPH-dependent reduction of L-glutamate 5-phosphate into L-glutamate 5-semialdehyde and phosphate. The product spontaneously undergoes cyclization to form 1-pyrroline-5-carboxylate. The protein is Gamma-glutamyl phosphate reductase of Oleidesulfovibrio alaskensis (strain ATCC BAA-1058 / DSM 17464 / G20) (Desulfovibrio alaskensis).